The following is a 172-amino-acid chain: Ribosome maturation factor RimM (172 aa).

The region spanning 96-168 (EGEFYYHQII…RVDVELMEGL (73 aa)) is the PRC barrel domain.

Belongs to the RimM family. In terms of assembly, binds ribosomal protein uS19.

The protein resides in the cytoplasm. Functionally, an accessory protein needed during the final step in the assembly of 30S ribosomal subunit, possibly for assembly of the head region. Essential for efficient processing of 16S rRNA. May be needed both before and after RbfA during the maturation of 16S rRNA. It has affinity for free ribosomal 30S subunits but not for 70S ribosomes. In Streptococcus pyogenes serotype M6 (strain ATCC BAA-946 / MGAS10394), this protein is Ribosome maturation factor RimM.